Here is a 383-residue protein sequence, read N- to C-terminus: Glucose-1-phosphate adenylyltransferase (383 aa).

Alpha-D-glucose 1-phosphate-binding positions include tyrosine 100, glycine 165, 180 to 181, and serine 191; that span reads EK.

The protein belongs to the bacterial/plant glucose-1-phosphate adenylyltransferase family. In terms of assembly, homotetramer.

The catalysed reaction is alpha-D-glucose 1-phosphate + ATP + H(+) = ADP-alpha-D-glucose + diphosphate. Its pathway is glycan biosynthesis; glycogen biosynthesis. Involved in the biosynthesis of ADP-glucose, a building block required for the elongation reactions to produce glycogen. Catalyzes the reaction between ATP and alpha-D-glucose 1-phosphate (G1P) to produce pyrophosphate and ADP-Glc. This chain is Glucose-1-phosphate adenylyltransferase, found in Clostridium kluyveri (strain ATCC 8527 / DSM 555 / NBRC 12016 / NCIMB 10680 / K1).